A 467-amino-acid polypeptide reads, in one-letter code: Fumarate hydratase class II (467 aa).

Substrate is bound by residues 98 to 100 (SGT), Arg126, 129 to 132 (HPND), 139 to 141 (SSN), and Thr187. Residue His188 is the Proton donor/acceptor of the active site. Residue Ser318 is part of the active site. Substrate is bound by residues Ser319 and 324–326 (KVN).

Belongs to the class-II fumarase/aspartase family. Fumarase subfamily. Homotetramer.

The protein resides in the cytoplasm. It carries out the reaction (S)-malate = fumarate + H2O. It functions in the pathway carbohydrate metabolism; tricarboxylic acid cycle; (S)-malate from fumarate: step 1/1. Its function is as follows. Involved in the TCA cycle. Catalyzes the stereospecific interconversion of fumarate to L-malate. The polypeptide is Fumarate hydratase class II (Shigella flexneri).